A 303-amino-acid chain; its full sequence is Recombination-associated protein RdgC (303 aa).

The protein belongs to the RdgC family.

It localises to the cytoplasm. Its subcellular location is the nucleoid. May be involved in recombination. This chain is Recombination-associated protein RdgC, found in Pseudoalteromonas translucida (strain TAC 125).